The sequence spans 395 residues: Phosphoprotein (395 aa).

Residues Pro65 to Lys72 are nuclear localization signal (NLS). The interval Asn178–Ala217 is disordered. Over residues Ala206–Ala217 the composition is skewed to low complexity. Residues Ile225–Leu234 form a nuclear export signal (NES) region.

The protein belongs to the rubulavirus/avulavirus P protein family. Interacts with host ARHGAP26; this interaction promotes host RHOA activation. Interacts with host KPNA1 and KPNA6.

It is found in the host cytoplasm. Essential component of the RNA polymerase and the nascent chain assembly complex. Also required during RNA synthesis. Also plays a role in viral growth by promoting host RHOA activation and thus actin formation via ARHGAP26 inhibition. In Human parainfluenza 2 virus (HPIV-2), this protein is Phosphoprotein (P/V).